We begin with the raw amino-acid sequence, 276 residues long: Secreted RxLR effector protein 85 (276 aa).

An N-terminal signal peptide occupies residues 1–27 (MRYCAFRLGLFFIGYSCCVLLSTPTLA). The short motif at 110-113 (RQLR) is the RxLR element.

The protein belongs to the RxLR effector family.

It is found in the secreted. The protein resides in the host cell membrane. Secreted effector that partially suppresses the host cell death induced by cell death-inducing proteins. In Plasmopara viticola (Downy mildew of grapevine), this protein is Secreted RxLR effector protein 85.